We begin with the raw amino-acid sequence, 218 residues long: GILT-like protein ZK669.3 (218 aa).

The first 21 residues, 1-21 (MRRLNGVFICLILFITKISYA), serve as a signal peptide directing secretion. Asn-129 and Asn-185 each carry an N-linked (GlcNAc...) asparagine glycan.

The protein belongs to the GILT family.

It localises to the secreted. This Caenorhabditis elegans protein is GILT-like protein ZK669.3.